A 466-amino-acid chain; its full sequence is UPF0652 protein C16A11.03c (466 aa).

This sequence belongs to the UPF0652 family.

It is found in the cytoplasm. The protein resides in the nucleus. The sequence is that of UPF0652 protein C16A11.03c from Schizosaccharomyces pombe (strain 972 / ATCC 24843) (Fission yeast).